The primary structure comprises 570 residues: Acetolactate synthase (570 aa).

A thiamine diphosphate-binding site is contributed by Glu-60. Residues Gln-162, 266–287, and 308–327 each bind FAD; these read FRNQ…IGYD and DEII…LIGD. The thiamine pyrophosphate binding stretch occupies residues 399 to 479; the sequence is SHAIWMSRYF…IVHIVWNDST (81 aa). Asp-450 provides a ligand contact to Mg(2+).

Belongs to the TPP enzyme family. Requires Mg(2+) as cofactor. It depends on thiamine diphosphate as a cofactor.

It catalyses the reaction 2 pyruvate + H(+) = (2S)-2-acetolactate + CO2. It participates in polyol metabolism; (R,R)-butane-2,3-diol biosynthesis; (R,R)-butane-2,3-diol from pyruvate: step 1/3. The protein is Acetolactate synthase (alsS) of Bacillus subtilis (strain 168).